Here is a 299-residue protein sequence, read N- to C-terminus: MTEFRSGFVCLVGRPNTGKSTLTNALVGTKVAITSMRPQTTRHTIRGIVHREDFQIILVDTPGLHRPRTLLGKRLNDLVRDTYAEVDVIGLCIPADEAIGPGDRWIVEQIRATAPKTTLVAIVTKIDKVPKDRVAAQLVAVSELVGDSAEIVPVSAVTGAQVDIVIDVLAAALPPGPAYYPDGELTDEPEEVLMAELIREAALEGVRDELPHSLAVVIDEVNPREDRDDLIDVHALLYVERDSQKGIIIGKGGARLREVGTAARAQIEKLLGTKVYLDLRVKVAKNWQSDPKQLGRLGF.

The Era-type G domain maps to 5 to 175; that stretch reads RSGFVCLVGR…IDVLAAALPP (171 aa). Residues 13 to 20 are G1; it reads GRPNTGKS. 13–20 is a binding site for GTP; the sequence is GRPNTGKS. Residues 39–43 form a G2 region; it reads QTTRH. The tract at residues 60 to 63 is G3; sequence DTPG. GTP is bound by residues 60–64 and 124–127; these read DTPGL and TKID. The interval 124-127 is G4; the sequence is TKID. Residues 154–156 form a G5 region; the sequence is VSA. A KH type-2 domain is found at 206–285; it reads VRDELPHSLA…YLDLRVKVAK (80 aa).

This sequence belongs to the TRAFAC class TrmE-Era-EngA-EngB-Septin-like GTPase superfamily. Era GTPase family. As to quaternary structure, monomer.

It localises to the cell envelope. The protein localises to the secreted. The protein resides in the cell wall. Exhibits GTPase activity. Binds RNA but is probably not involved in ribosome assembly in mycobacteria. In Mycolicibacterium paratuberculosis (strain ATCC BAA-968 / K-10) (Mycobacterium paratuberculosis), this protein is GTPase Era.